A 264-amino-acid polypeptide reads, in one-letter code: Indole-3-glycerol phosphate synthase (264 aa).

The protein belongs to the TrpC family.

It catalyses the reaction 1-(2-carboxyphenylamino)-1-deoxy-D-ribulose 5-phosphate + H(+) = (1S,2R)-1-C-(indol-3-yl)glycerol 3-phosphate + CO2 + H2O. It functions in the pathway amino-acid biosynthesis; L-tryptophan biosynthesis; L-tryptophan from chorismate: step 4/5. This is Indole-3-glycerol phosphate synthase from Azoarcus sp. (strain BH72).